A 459-amino-acid polypeptide reads, in one-letter code: ATP-dependent protease ATPase subunit HslU (459 aa).

ATP contacts are provided by residues V18, 60 to 65 (GVGKTE), D269, E337, and R409.

It belongs to the ClpX chaperone family. HslU subfamily. As to quaternary structure, a double ring-shaped homohexamer of HslV is capped on each side by a ring-shaped HslU homohexamer. The assembly of the HslU/HslV complex is dependent on binding of ATP.

It is found in the cytoplasm. ATPase subunit of a proteasome-like degradation complex; this subunit has chaperone activity. The binding of ATP and its subsequent hydrolysis by HslU are essential for unfolding of protein substrates subsequently hydrolyzed by HslV. HslU recognizes the N-terminal part of its protein substrates and unfolds these before they are guided to HslV for hydrolysis. In Myxococcus xanthus (strain DK1622), this protein is ATP-dependent protease ATPase subunit HslU.